Reading from the N-terminus, the 213-residue chain is Thymidine kinase (213 aa).

ATP contacts are provided by residues 22-29 and 94-97; these read GSMFSGKT and DEAQ. The active-site Proton acceptor is the Glu-95. Positions 151, 154, 183, and 186 each coordinate Zn(2+). Positions 185-213 are disordered; the sequence is RCFQPPRPTSTSSLKAPAPAATAPRPELP. The span at 193–213 shows a compositional bias: low complexity; that stretch reads TSTSSLKAPAPAATAPRPELP.

The protein belongs to the thymidine kinase family. As to quaternary structure, homotetramer.

It localises to the cytoplasm. The catalysed reaction is thymidine + ATP = dTMP + ADP + H(+). The polypeptide is Thymidine kinase (Rhodothermus sp. (strain ITI 518)).